The following is a 211-amino-acid chain: Glycerol-3-phosphate acyltransferase (211 aa).

Transmembrane regions (helical) follow at residues 5 to 25, 80 to 100, 112 to 132, and 138 to 158; these read ALGMMLIAYLCGSISSAILFC, PLYLGLTAIAACLGHIYPVFF, FGAIAPIGWDLTGLMTGTWLL, and GYSSLGAIVSALIAPFYVWWF.

This sequence belongs to the PlsY family. As to quaternary structure, probably interacts with PlsX.

Its subcellular location is the cell inner membrane. It carries out the reaction an acyl phosphate + sn-glycerol 3-phosphate = a 1-acyl-sn-glycero-3-phosphate + phosphate. Its pathway is lipid metabolism; phospholipid metabolism. Its function is as follows. Catalyzes the transfer of an acyl group from acyl-phosphate (acyl-PO(4)) to glycerol-3-phosphate (G3P) to form lysophosphatidic acid (LPA). This enzyme utilizes acyl-phosphate as fatty acyl donor, but not acyl-CoA or acyl-ACP. The chain is Glycerol-3-phosphate acyltransferase from Pectobacterium carotovorum subsp. carotovorum (strain PC1).